The sequence spans 557 residues: Pectinesterase/pectinesterase inhibitor 18 (557 aa).

A signal peptide spans 1 to 34 (MSNSNQPLLSKPKSLKHKNLCLVLSFVAILGSVA). Positions 47 to 203 (NNDDSLLTTS…VSRARVALAI (157 aa)) are pectinesterase inhibitor 18. The interval 246-543 (NVVVAKDGTG…FTVAKLIQGG (298 aa)) is pectinesterase 18. Residues threonine 321 and glutamine 351 each coordinate substrate. The Proton donor; for pectinesterase activity role is filled by aspartate 374. Aspartate 395 (nucleophile; for pectinesterase activity) is an active-site residue. Substrate-binding residues include arginine 463 and tryptophan 465.

This sequence in the N-terminal section; belongs to the PMEI family. It in the C-terminal section; belongs to the pectinesterase family. As to expression, expressed in siliques, flowers, floral stems, rosette leaves and roots.

The protein resides in the secreted. Its subcellular location is the cell wall. It catalyses the reaction [(1-&gt;4)-alpha-D-galacturonosyl methyl ester](n) + n H2O = [(1-&gt;4)-alpha-D-galacturonosyl](n) + n methanol + n H(+). It carries out the reaction Endohydrolysis of the N-glycosidic bond at one specific adenosine on the 28S rRNA.. It functions in the pathway glycan metabolism; pectin degradation; 2-dehydro-3-deoxy-D-gluconate from pectin: step 1/5. Acts in the modification of cell walls via demethylesterification of cell wall pectin. Inhibits the elongation phase of protein synthesis. This chain is Pectinesterase/pectinesterase inhibitor 18 (PME18), found in Arabidopsis thaliana (Mouse-ear cress).